The primary structure comprises 311 residues: DNA replication terminus site-binding protein (311 aa).

The protein belongs to the Tus family.

It localises to the cytoplasm. In terms of biological role, trans-acting protein required for termination of DNA replication. Binds to DNA replication terminator sequences (terA to terF) to prevent the passage of replication forks. The termination efficiency will be affected by the affinity of this protein for the terminator sequence. The sequence is that of DNA replication terminus site-binding protein from Yersinia pseudotuberculosis serotype O:1b (strain IP 31758).